We begin with the raw amino-acid sequence, 1077 residues long: ATP-dependent helicase HRQ1 (1077 aa).

The Helicase ATP-binding domain occupies Ile-299–Leu-483. Thr-312–Ser-319 is a binding site for ATP. A DEAH box motif is present at residues Asp-423–His-426. A Helicase C-terminal domain is found at Ile-521–Leu-678.

Belongs to the helicase family. HRQ1 subfamily. As to quaternary structure, forms heptamer rings. Interacts with RAD4. It depends on Mg(2+) as a cofactor.

The protein localises to the nucleus. It catalyses the reaction Couples ATP hydrolysis with the unwinding of duplex DNA by translocating in the 3'-5' direction.. It carries out the reaction ATP + H2O = ADP + phosphate + H(+). In terms of biological role, helicase with 3'-5' helicase activity involved in genome stability. Functions in the RAD4-dependent nucleotide excision repair (NER) pathway and plays a critical role in DNA interstrand cross-link repair. Unwinds relatively long duplex DNA up to 120-bp and requires a long 3'-tail of at least 70 nucleotides for efficient unwinding of duplex DNA. Activity is significantly stimulated by a preexisting fork structure. Shows both processive helicase and DNA strand annealing activities. Affects telomere length by a non-catalytic mechanism, probably through inhibiting telomerase by competing with it for ssDNA binding. The chain is ATP-dependent helicase HRQ1 from Saccharomyces cerevisiae (strain ATCC 204508 / S288c) (Baker's yeast).